Here is a 332-residue protein sequence, read N- to C-terminus: tRNA U34 carboxymethyltransferase (332 aa).

Residues lysine 96, tryptophan 110, lysine 115, glycine 135, 186 to 187 (LE), methionine 204, tyrosine 208, and arginine 323 contribute to the carboxy-S-adenosyl-L-methionine site.

It belongs to the class I-like SAM-binding methyltransferase superfamily. CmoB family. As to quaternary structure, homotetramer.

The enzyme catalyses carboxy-S-adenosyl-L-methionine + 5-hydroxyuridine(34) in tRNA = 5-carboxymethoxyuridine(34) in tRNA + S-adenosyl-L-homocysteine + H(+). Functionally, catalyzes carboxymethyl transfer from carboxy-S-adenosyl-L-methionine (Cx-SAM) to 5-hydroxyuridine (ho5U) to form 5-carboxymethoxyuridine (cmo5U) at position 34 in tRNAs. The chain is tRNA U34 carboxymethyltransferase from Hydrogenovibrio crunogenus (strain DSM 25203 / XCL-2) (Thiomicrospira crunogena).